The sequence spans 179 residues: Large ribosomal subunit protein uL6 (179 aa).

It belongs to the universal ribosomal protein uL6 family. Part of the 50S ribosomal subunit.

In terms of biological role, this protein binds to the 23S rRNA, and is important in its secondary structure. It is located near the subunit interface in the base of the L7/L12 stalk, and near the tRNA binding site of the peptidyltransferase center. The sequence is that of Large ribosomal subunit protein uL6 from Buchnera aphidicola subsp. Baizongia pistaciae (strain Bp).